The sequence spans 360 residues: UDP-N-acetylglucosamine--N-acetylmuramyl-(pentapeptide) pyrophosphoryl-undecaprenol N-acetylglucosamine transferase (360 aa).

Positions 198 and 289 each coordinate UDP-N-acetyl-alpha-D-glucosamine.

The protein belongs to the glycosyltransferase 28 family. MurG subfamily.

The protein resides in the cell membrane. It catalyses the reaction Mur2Ac(oyl-L-Ala-gamma-D-Glu-L-Lys-D-Ala-D-Ala)-di-trans,octa-cis-undecaprenyl diphosphate + UDP-N-acetyl-alpha-D-glucosamine = beta-D-GlcNAc-(1-&gt;4)-Mur2Ac(oyl-L-Ala-gamma-D-Glu-L-Lys-D-Ala-D-Ala)-di-trans,octa-cis-undecaprenyl diphosphate + UDP + H(+). It participates in cell wall biogenesis; peptidoglycan biosynthesis. Functionally, cell wall formation. Catalyzes the transfer of a GlcNAc subunit on undecaprenyl-pyrophosphoryl-MurNAc-pentapeptide (lipid intermediate I) to form undecaprenyl-pyrophosphoryl-MurNAc-(pentapeptide)GlcNAc (lipid intermediate II). The polypeptide is UDP-N-acetylglucosamine--N-acetylmuramyl-(pentapeptide) pyrophosphoryl-undecaprenol N-acetylglucosamine transferase (Streptococcus pyogenes serotype M3 (strain SSI-1)).